The sequence spans 37 residues: Large ribosomal subunit protein bL36 (37 aa).

It belongs to the bacterial ribosomal protein bL36 family.

This chain is Large ribosomal subunit protein bL36, found in Aliivibrio fischeri (strain ATCC 700601 / ES114) (Vibrio fischeri).